The following is a 190-amino-acid chain: Lipocalin Can f 6.0101 (190 aa).

The first 15 residues, 1–15 (MKLLLLCLGLILVHA), serve as a signal peptide directing secretion. An igE-binding region spans residues 43–54 (SDIKEKIEENGS). Residues Asn52 and Asn67 are each glycosylated (N-linked (GlcNAc...) asparagine). Residues 76 to 83 (TKVNGKCT) are igE-binding. Cys82 and Cys175 are disulfide-bonded. A glycan (N-linked (GlcNAc...) asparagine) is linked at Asn90. An igE-binding region spans residues 91–97 (KTEKDGE). The interval 100–109 (VVHDGYNLFR) is no IgE-binding. IgE-binding regions lie at residues 125–132 (NVNQEQEF) and 139–152 (GRKPDVSPKVKEKF).

It belongs to the calycin superfamily. Lipocalin family. As to quaternary structure, monomer. Expressed in saliva (at protein level). Expressed in dander (at protein level). According to PubMed:22104604, expressed in submaxillary gland. In contrast, according to PubMed:22515174, not expressed in submaxillary gland. Expressed in bladder and skin, but not in tongue.

It is found in the secreted. This Canis lupus familiaris (Dog) protein is Lipocalin Can f 6.0101.